The chain runs to 440 residues: Chromosome partition protein MukF (440 aa).

Residues Leu208–Ile236 are leucine-zipper.

It belongs to the MukF family. In terms of assembly, interacts, and probably forms a ternary complex, with MukE and MukB via its C-terminal region. The complex formation is stimulated by calcium or magnesium. It is required for an interaction between MukE and MukB.

The protein resides in the cytoplasm. It localises to the nucleoid. Its function is as follows. Involved in chromosome condensation, segregation and cell cycle progression. May participate in facilitating chromosome segregation by condensation DNA from both sides of a centrally located replisome during cell division. Not required for mini-F plasmid partitioning. Probably acts via its interaction with MukB and MukE. Overexpression results in anucleate cells. It has a calcium binding activity. This Histophilus somni (strain 2336) (Haemophilus somnus) protein is Chromosome partition protein MukF.